The sequence spans 291 residues: 4-diphosphocytidyl-2-C-methyl-D-erythritol kinase (291 aa).

K12 is an active-site residue. Residue 95-105 participates in ATP binding; that stretch reads PDGGGLGGGSS. Residue D137 is part of the active site.

The protein belongs to the GHMP kinase family. IspE subfamily.

The catalysed reaction is 4-CDP-2-C-methyl-D-erythritol + ATP = 4-CDP-2-C-methyl-D-erythritol 2-phosphate + ADP + H(+). The protein operates within isoprenoid biosynthesis; isopentenyl diphosphate biosynthesis via DXP pathway; isopentenyl diphosphate from 1-deoxy-D-xylulose 5-phosphate: step 3/6. Catalyzes the phosphorylation of the position 2 hydroxy group of 4-diphosphocytidyl-2C-methyl-D-erythritol. This Alkalilimnicola ehrlichii (strain ATCC BAA-1101 / DSM 17681 / MLHE-1) protein is 4-diphosphocytidyl-2-C-methyl-D-erythritol kinase.